The sequence spans 386 residues: Patatin-16 (386 aa).

The N-terminal stretch at 1 to 23 is a signal peptide; it reads MATTKSFLILIVMILATTSSTFA. The PNPLA domain occupies 32–229; it reads LSIDGGGIKG…TVADPALLSV (198 aa). The GXGXXG signature appears at 36–41; that stretch reads GGGIKG. The short motif at 75 to 79 is the GXSXG element; that stretch reads GTSTG. The active-site Nucleophile is Ser77. N-linked (GlcNAc...) asparagine glycosylation occurs at Asn115. Asp215 (proton acceptor) is an active-site residue. A DGA/G motif is present at residues 215–217; it reads DGA. Positions 360-384 form a coiled coil; sequence ETYEEALKRFAKLLSDRKKLRANKA.

Belongs to the patatin family.

Its subcellular location is the vacuole. Functionally, probable lipolytic acyl hydrolase (LAH), an activity which is thought to be involved in the response of tubers to pathogens. This is Patatin-16 from Solanum tuberosum (Potato).